Reading from the N-terminus, the 242-residue chain is UPF0073 membrane protein Rv1085c (242 aa).

The next 7 helical transmembrane spans lie at 42 to 62, 67 to 87, 108 to 128, 133 to 153, 159 to 179, 186 to 206, and 222 to 242; these read VYSA…SWAV, AGLT…VSAT, SMIF…ALPA, VVLS…MCWP, VGVP…ATIL, ALVL…LYAV, and FHAC…FVVF.

The protein belongs to the UPF0073 (Hly-III) family.

It localises to the cell membrane. The sequence is that of UPF0073 membrane protein Rv1085c from Mycobacterium tuberculosis (strain ATCC 25618 / H37Rv).